Reading from the N-terminus, the 67-residue chain is Large ribosomal subunit protein eL24 (67 aa).

Zn(2+)-binding residues include Cys-7, Cys-10, Cys-33, and Cys-37. Residues 7-37 (CDYCGTDIEPGTGTMFVHKDGATTHFCSSKC) form a C4-type zinc finger. Over residues 48–60 (RNLEWTDTARGEA) the composition is skewed to basic and acidic residues. Residues 48-67 (RNLEWTDTARGEAGEAEDEA) form a disordered region.

It belongs to the eukaryotic ribosomal protein eL24 family. Part of the 50S ribosomal subunit. Forms a cluster with proteins L3 and L14. It depends on Zn(2+) as a cofactor.

Functionally, binds to the 23S rRNA. The sequence is that of Large ribosomal subunit protein eL24 (rpl24e) from Haloarcula marismortui (strain ATCC 43049 / DSM 3752 / JCM 8966 / VKM B-1809) (Halobacterium marismortui).